Consider the following 599-residue polypeptide: Sulfite reductase [NADPH] flavoprotein alpha-component (599 aa).

The Flavodoxin-like domain occupies 64–202; that stretch reads VTLISASQTG…AASEWRARVV (139 aa). Residues 70-75, 117-120, and 153-162 each bind FMN; these read SQTGNA, STQG, and LGDTSYEFFC. An FAD-binding FR-type domain is found at 234–448; that stretch reads DAPLTATLSV…IEHNDNFRLP (215 aa). Residues threonine 322, alanine 356, 386–389, 404–406, tyrosine 410, and 419–422 contribute to the FAD site; these read RLYS, TVG, and GGAS. Residues 519 to 520, 525 to 529, and aspartate 561 each bind NADP(+); these read SR and KIYVQ. Tyrosine 599 contacts FAD.

This sequence belongs to the NADPH-dependent sulphite reductase flavoprotein subunit CysJ family. In the N-terminal section; belongs to the flavodoxin family. The protein in the C-terminal section; belongs to the flavoprotein pyridine nucleotide cytochrome reductase family. As to quaternary structure, alpha(8)-beta(8). The alpha component is a flavoprotein, the beta component is a hemoprotein. Requires FAD as cofactor. It depends on FMN as a cofactor.

The catalysed reaction is hydrogen sulfide + 3 NADP(+) + 3 H2O = sulfite + 3 NADPH + 4 H(+). The protein operates within sulfur metabolism; hydrogen sulfide biosynthesis; hydrogen sulfide from sulfite (NADPH route): step 1/1. Functionally, component of the sulfite reductase complex that catalyzes the 6-electron reduction of sulfite to sulfide. This is one of several activities required for the biosynthesis of L-cysteine from sulfate. The flavoprotein component catalyzes the electron flow from NADPH -&gt; FAD -&gt; FMN to the hemoprotein component. This Salmonella paratyphi A (strain ATCC 9150 / SARB42) protein is Sulfite reductase [NADPH] flavoprotein alpha-component.